The chain runs to 207 residues: Large ribosomal subunit protein uL4 (207 aa).

The tract at residues 45–89 is disordered; it reads RQGTHKVKTRSEVRGGGRKPWRQKGTGRARQGSIRSPQWRGGGTV. Over residues 60 to 71 the composition is skewed to basic residues; sequence GGRKPWRQKGTG.

Belongs to the universal ribosomal protein uL4 family. As to quaternary structure, part of the 50S ribosomal subunit.

Functionally, one of the primary rRNA binding proteins, this protein initially binds near the 5'-end of the 23S rRNA. It is important during the early stages of 50S assembly. It makes multiple contacts with different domains of the 23S rRNA in the assembled 50S subunit and ribosome. Its function is as follows. Forms part of the polypeptide exit tunnel. The chain is Large ribosomal subunit protein uL4 from Bacillus mycoides (strain KBAB4) (Bacillus weihenstephanensis).